We begin with the raw amino-acid sequence, 437 residues long: Histidinol dehydrogenase (437 aa).

NAD(+) contacts are provided by Tyr133, Gln191, and Asn214. The substrate site is built by Ser240, Gln262, and His265. Zn(2+) is bound by residues Gln262 and His265. Residues Glu329 and His330 each act as proton acceptor in the active site. Substrate contacts are provided by His330, Asp363, Glu417, and His422. Residue Asp363 coordinates Zn(2+). His422 contacts Zn(2+).

This sequence belongs to the histidinol dehydrogenase family. In terms of assembly, homodimer. Zn(2+) is required as a cofactor.

The enzyme catalyses L-histidinol + 2 NAD(+) + H2O = L-histidine + 2 NADH + 3 H(+). It participates in amino-acid biosynthesis; L-histidine biosynthesis; L-histidine from 5-phospho-alpha-D-ribose 1-diphosphate: step 9/9. In terms of biological role, catalyzes the sequential NAD-dependent oxidations of L-histidinol to L-histidinaldehyde and then to L-histidine. In Blochmanniella floridana, this protein is Histidinol dehydrogenase.